A 274-amino-acid chain; its full sequence is Putative phosphoenolpyruvate synthase regulatory protein (274 aa).

154 to 161 (AVSRSGKT) contributes to the ADP binding site.

Belongs to the pyruvate, phosphate/water dikinase regulatory protein family. PSRP subfamily.

It catalyses the reaction [pyruvate, water dikinase] + ADP = [pyruvate, water dikinase]-phosphate + AMP + H(+). It carries out the reaction [pyruvate, water dikinase]-phosphate + phosphate + H(+) = [pyruvate, water dikinase] + diphosphate. Functionally, bifunctional serine/threonine kinase and phosphorylase involved in the regulation of the phosphoenolpyruvate synthase (PEPS) by catalyzing its phosphorylation/dephosphorylation. The chain is Putative phosphoenolpyruvate synthase regulatory protein from Alkalilimnicola ehrlichii (strain ATCC BAA-1101 / DSM 17681 / MLHE-1).